The following is a 565-amino-acid chain: Adenine deaminase (565 aa).

Belongs to the metallo-dependent hydrolases superfamily. Adenine deaminase family. Mn(2+) is required as a cofactor.

It catalyses the reaction adenine + H2O + H(+) = hypoxanthine + NH4(+). This is Adenine deaminase from Lactobacillus delbrueckii subsp. bulgaricus (strain ATCC 11842 / DSM 20081 / BCRC 10696 / JCM 1002 / NBRC 13953 / NCIMB 11778 / NCTC 12712 / WDCM 00102 / Lb 14).